Consider the following 362-residue polypeptide: Dihydroorotate dehydrogenase (quinone) (362 aa).

FMN-binding positions include 62-66 and threonine 86; that span reads AGYDK. Position 66 (lysine 66) interacts with substrate. 111–115 contributes to the substrate binding site; it reads NRLGF. Residues asparagine 139 and asparagine 170 each coordinate FMN. Substrate is bound at residue asparagine 170. Serine 173 (nucleophile) is an active-site residue. Asparagine 175 is a substrate binding site. 2 residues coordinate FMN: lysine 215 and serine 243. Residue 244 to 245 coordinates substrate; it reads NT. FMN-binding positions include glycine 266, glycine 295, and 316 to 317; that span reads YS.

The protein belongs to the dihydroorotate dehydrogenase family. Type 2 subfamily. In terms of assembly, monomer. It depends on FMN as a cofactor.

It localises to the cell membrane. It carries out the reaction (S)-dihydroorotate + a quinone = orotate + a quinol. It participates in pyrimidine metabolism; UMP biosynthesis via de novo pathway; orotate from (S)-dihydroorotate (quinone route): step 1/1. In terms of biological role, catalyzes the conversion of dihydroorotate to orotate with quinone as electron acceptor. The polypeptide is Dihydroorotate dehydrogenase (quinone) (Rhizobium meliloti (strain 1021) (Ensifer meliloti)).